The following is a 323-amino-acid chain: tRNA dimethylallyltransferase (323 aa).

12–19 contributes to the ATP binding site; the sequence is GPTAAGKT. Substrate is bound at residue 14–19; sequence TAAGKT. Interaction with substrate tRNA regions lie at residues 37-40 and 161-165; these read DSAL and QRLIR.

Belongs to the IPP transferase family. Monomer. Mg(2+) serves as cofactor.

The catalysed reaction is adenosine(37) in tRNA + dimethylallyl diphosphate = N(6)-dimethylallyladenosine(37) in tRNA + diphosphate. Catalyzes the transfer of a dimethylallyl group onto the adenine at position 37 in tRNAs that read codons beginning with uridine, leading to the formation of N6-(dimethylallyl)adenosine (i(6)A). In Pseudomonas savastanoi pv. phaseolicola (strain 1448A / Race 6) (Pseudomonas syringae pv. phaseolicola (strain 1448A / Race 6)), this protein is tRNA dimethylallyltransferase.